Here is a 92-residue protein sequence, read N- to C-terminus: Small ribosomal subunit protein uS19c (92 aa).

It belongs to the universal ribosomal protein uS19 family.

It localises to the plastid. The protein resides in the chloroplast. Protein S19 forms a complex with S13 that binds strongly to the 16S ribosomal RNA. The protein is Small ribosomal subunit protein uS19c of Daucus carota (Wild carrot).